Consider the following 259-residue polypeptide: L-erythrulose-1-phosphate isomerase (259 aa).

Residue histidine 102 is the Electrophile of the active site. Catalysis depends on glutamate 174, which acts as the Proton acceptor.

Belongs to the triosephosphate isomerase family.

It carries out the reaction L-erythrulose 1-phosphate = D-erythrulose 4-phosphate. It participates in carbohydrate metabolism. Functionally, involved in catabolism of D-apiose. Catalyzes the isomerization of L-erythrulose 1-phosphate to D-erythrulose 4-phosphate. The sequence is that of L-erythrulose-1-phosphate isomerase from Pectobacterium atrosepticum (strain SCRI 1043 / ATCC BAA-672) (Erwinia carotovora subsp. atroseptica).